The primary structure comprises 258 residues: Indole-3-glycerol phosphate synthase (258 aa).

The protein belongs to the TrpC family.

The enzyme catalyses 1-(2-carboxyphenylamino)-1-deoxy-D-ribulose 5-phosphate + H(+) = (1S,2R)-1-C-(indol-3-yl)glycerol 3-phosphate + CO2 + H2O. Its pathway is amino-acid biosynthesis; L-tryptophan biosynthesis; L-tryptophan from chorismate: step 4/5. The polypeptide is Indole-3-glycerol phosphate synthase (Chlorobium phaeovibrioides (strain DSM 265 / 1930) (Prosthecochloris vibrioformis (strain DSM 265))).